The chain runs to 503 residues: Maturase K (503 aa).

The protein belongs to the intron maturase 2 family. MatK subfamily.

The protein resides in the plastid. The protein localises to the chloroplast. Its function is as follows. Usually encoded in the trnK tRNA gene intron. Probably assists in splicing its own and other chloroplast group II introns. In Rubus ursinus (California blackberry), this protein is Maturase K.